Consider the following 366-residue polypeptide: DNA polymerase IV (366 aa).

The 192-residue stretch at 6–197 folds into the UmuC domain; that stretch reads IIHVDMDYFY…LKVSKLWGIG (192 aa). The Mg(2+) site is built by Asp10 and Asp114. Glu115 is a catalytic residue.

Belongs to the DNA polymerase type-Y family. As to quaternary structure, monomer. Mg(2+) is required as a cofactor.

The protein localises to the cytoplasm. It carries out the reaction DNA(n) + a 2'-deoxyribonucleoside 5'-triphosphate = DNA(n+1) + diphosphate. Its function is as follows. Poorly processive, error-prone DNA polymerase involved in untargeted mutagenesis. Copies undamaged DNA at stalled replication forks, which arise in vivo from mismatched or misaligned primer ends. These misaligned primers can be extended by PolIV. Exhibits no 3'-5' exonuclease (proofreading) activity. May be involved in translesional synthesis. This Methanosarcina acetivorans (strain ATCC 35395 / DSM 2834 / JCM 12185 / C2A) protein is DNA polymerase IV.